The following is a 186-amino-acid chain: Shikimate kinase (186 aa).

15 to 20 (GAGKTT) contacts ATP. Mg(2+) is bound at residue T19. Substrate-binding residues include D37, R61, and G83. Position 121 (R121) interacts with ATP. R140 contacts substrate.

It belongs to the shikimate kinase family. In terms of assembly, monomer. The cofactor is Mg(2+).

The protein localises to the cytoplasm. The catalysed reaction is shikimate + ATP = 3-phosphoshikimate + ADP + H(+). The protein operates within metabolic intermediate biosynthesis; chorismate biosynthesis; chorismate from D-erythrose 4-phosphate and phosphoenolpyruvate: step 5/7. Catalyzes the specific phosphorylation of the 3-hydroxyl group of shikimic acid using ATP as a cosubstrate. This is Shikimate kinase from Psychrobacter arcticus (strain DSM 17307 / VKM B-2377 / 273-4).